We begin with the raw amino-acid sequence, 325 residues long: Ribosomal RNA small subunit methyltransferase H (325 aa).

S-adenosyl-L-methionine contacts are provided by residues 42 to 44 (GGH), D62, F86, D105, and Q112.

The protein belongs to the methyltransferase superfamily. RsmH family.

Its subcellular location is the cytoplasm. The enzyme catalyses cytidine(1402) in 16S rRNA + S-adenosyl-L-methionine = N(4)-methylcytidine(1402) in 16S rRNA + S-adenosyl-L-homocysteine + H(+). Functionally, specifically methylates the N4 position of cytidine in position 1402 (C1402) of 16S rRNA. This chain is Ribosomal RNA small subunit methyltransferase H, found in Cupriavidus metallidurans (strain ATCC 43123 / DSM 2839 / NBRC 102507 / CH34) (Ralstonia metallidurans).